The following is a 510-amino-acid chain: MDIRAAEISAILKSQIANFGEEADVSDVGSVLSVGDGIARVYGLDNVQAGEMVEFPSAGVKGMALNLERDNVGIVIFGEDRAIREGDEVRRLGEIVDVPVGKGLLGRVVNPLGEPIDGKGPIQNVAERRRVDVKAPGIIPRKSVHEPVQTGLKAIDTLIPVGRGQRELIIGDRQTGKTAVAVDTILNQKQVNAGGDESQKLYCIYVAIGQKRSTVAQIVKTLEERGALDYTIVVSATASEPAPLQFLAPFAGCAMGEWFRDNGMHAVIIYDDLSKQAVAYRQMSLLLRRPPGREAYPGDVFYLHSRLLERAAKLNEDNGLGSLTALPIIETQANDVSAYIPTNVISITDGQIFLETDLFFQGIRPAVNVGISVSRVGSSAQIKAMKTAAGPIKGELAQYREMAAFAKFGSDLDVATQRQLARGERLTELLKQPQYSPLAVEEQVVSVYAGTRGYLDKIPTAQVGRFESELLSYMHAKHQDILDEIRTKKDLGPVEDRLKSALAAFADSFA.

171–178 lines the ATP pocket; that stretch reads GDRQTGKT.

The protein belongs to the ATPase alpha/beta chains family. In terms of assembly, F-type ATPases have 2 components, CF(1) - the catalytic core - and CF(0) - the membrane proton channel. CF(1) has five subunits: alpha(3), beta(3), gamma(1), delta(1), epsilon(1). CF(0) has three main subunits: a(1), b(2) and c(9-12). The alpha and beta chains form an alternating ring which encloses part of the gamma chain. CF(1) is attached to CF(0) by a central stalk formed by the gamma and epsilon chains, while a peripheral stalk is formed by the delta and b chains.

It localises to the cell inner membrane. It carries out the reaction ATP + H2O + 4 H(+)(in) = ADP + phosphate + 5 H(+)(out). Produces ATP from ADP in the presence of a proton gradient across the membrane. The alpha chain is a regulatory subunit. This Phenylobacterium zucineum (strain HLK1) protein is ATP synthase subunit alpha.